We begin with the raw amino-acid sequence, 479 residues long: Ribulose bisphosphate carboxylase large chain (479 aa).

The propeptide occupies 1–2; sequence MS. Substrate contacts are provided by Asn-123 and Thr-173. Lys-175 acts as the Proton acceptor in catalysis. Substrate is bound at residue Lys-177. Mg(2+)-binding residues include Lys-201, Asp-203, and Glu-204. Lys-201 is modified (N6-carboxylysine). Ser-208 carries the post-translational modification Phosphoserine. His-294 functions as the Proton acceptor in the catalytic mechanism. Substrate contacts are provided by Arg-295 and His-327. A Phosphothreonine modification is found at Thr-330. Residue Ser-379 participates in substrate binding.

This sequence belongs to the RuBisCO large chain family. Type I subfamily. In terms of assembly, heterohexadecamer of 8 large chains and 8 small chains; disulfide-linked. The disulfide link is formed within the large subunit homodimers. It depends on Mg(2+) as a cofactor. The disulfide bond which can form in the large chain dimeric partners within the hexadecamer appears to be associated with oxidative stress and protein turnover.

The protein resides in the plastid. The protein localises to the chloroplast. It catalyses the reaction 2 (2R)-3-phosphoglycerate + 2 H(+) = D-ribulose 1,5-bisphosphate + CO2 + H2O. The catalysed reaction is D-ribulose 1,5-bisphosphate + O2 = 2-phosphoglycolate + (2R)-3-phosphoglycerate + 2 H(+). Functionally, ruBisCO catalyzes two reactions: the carboxylation of D-ribulose 1,5-bisphosphate, the primary event in carbon dioxide fixation, as well as the oxidative fragmentation of the pentose substrate in the photorespiration process. Both reactions occur simultaneously and in competition at the same active site. The chain is Ribulose bisphosphate carboxylase large chain from Draba nemorosa (Woodland whitlowgrass).